The following is a 169-amino-acid chain: Ribosome maturation factor RimM (169 aa).

Residues 94–167 enclose the PRC barrel domain; the sequence is ENEFYFHEII…KITIEVMEGL (74 aa).

This sequence belongs to the RimM family. As to quaternary structure, binds ribosomal protein uS19.

The protein localises to the cytoplasm. An accessory protein needed during the final step in the assembly of 30S ribosomal subunit, possibly for assembly of the head region. Essential for efficient processing of 16S rRNA. May be needed both before and after RbfA during the maturation of 16S rRNA. It has affinity for free ribosomal 30S subunits but not for 70S ribosomes. The protein is Ribosome maturation factor RimM of Listeria welshimeri serovar 6b (strain ATCC 35897 / DSM 20650 / CCUG 15529 / CIP 8149 / NCTC 11857 / SLCC 5334 / V8).